A 493-amino-acid chain; its full sequence is 3-octaprenyl-4-hydroxybenzoate carboxy-lyase (493 aa).

Position 172 (N172) interacts with Mn(2+). Prenylated FMN-binding positions include I175–R177, R189–L191, and R194–G195. E238 is a Mn(2+) binding site. D287 (proton donor) is an active-site residue.

The protein belongs to the UbiD family. Homohexamer. Prenylated FMN serves as cofactor. Mn(2+) is required as a cofactor.

It is found in the cell membrane. It carries out the reaction a 4-hydroxy-3-(all-trans-polyprenyl)benzoate + H(+) = a 2-(all-trans-polyprenyl)phenol + CO2. Its pathway is cofactor biosynthesis; ubiquinone biosynthesis. Functionally, catalyzes the decarboxylation of 3-octaprenyl-4-hydroxy benzoate to 2-octaprenylphenol, an intermediate step in ubiquinone biosynthesis. The protein is 3-octaprenyl-4-hydroxybenzoate carboxy-lyase of Shewanella woodyi (strain ATCC 51908 / MS32).